The following is a 1148-amino-acid chain: Signal transducer and activator of transcription B (1148 aa).

The segment covering 1 to 36 (MEVTNNGSNNSSTIASTNPPTSPSTTSTSKSLPPLS) has biased composition (low complexity). 5 disordered regions span residues 1–81 (MEVT…NNNN), 93–178 (SSSN…LSSS), 268–312 (NTNN…PSNG), 403–425 (KNNI…NSLL), and 453–645 (YDYN…KTVT). Positions 37 to 47 (FLNSQWENKQS) are enriched in polar residues. Composition is skewed to low complexity over residues 48–81 (NNNN…NNNN), 106–178 (NNNN…LSSS), and 268–298 (NTNN…NNNN). Residues 466 to 517 (SNSSNNNSSNNNSNNNNNNNSNNNNNIIGSISPPHSSQLQQVSSPQQQQQQQ) show a composition bias toward low complexity. Polar residues predominate over residues 525–541 (SISSGSIKDLINSPNKE). Over residues 544–557 (SKSQYPSSLSQSSS) the composition is skewed to low complexity. The segment covering 561 to 572 (MDTDVDSTDEFD) has biased composition (acidic residues). A compositionally biased stretch (low complexity) spans 574–610 (GSNSNNNNNNNNNNNNNNNSNNSNNKKRNNSNNNNLG). An SH2 domain is found at 997 to 1122 (WQNGFIFMFL…TIPVFKREPK (126 aa)).

It belongs to the transcription factor STAT family. Homodimer. Does not form heterodimers with other family members.

It is found in the nucleus. Its function is as follows. Transcription factor that regulates gene expression during development. Required for optimal cell growth. This is Signal transducer and activator of transcription B (dstB) from Dictyostelium discoideum (Social amoeba).